The chain runs to 214 residues: Thymidylate kinase (214 aa).

9 to 16 (GIEGCGKT) lines the ATP pocket.

This sequence belongs to the thymidylate kinase family.

It carries out the reaction dTMP + ATP = dTDP + ADP. Its function is as follows. Phosphorylation of dTMP to form dTDP in both de novo and salvage pathways of dTTP synthesis. The protein is Thymidylate kinase of Geotalea daltonii (strain DSM 22248 / JCM 15807 / FRC-32) (Geobacter daltonii).